The sequence spans 375 residues: Trichodiene synthase (375 aa).

The protein belongs to the trichodiene synthase family.

It carries out the reaction (2E,6E)-farnesyl diphosphate = trichodiene + diphosphate. The protein operates within sesquiterpene biosynthesis; trichothecene biosynthesis. In terms of biological role, TS is a member of the terpene cyclase group of enzymes. It catalyzes the isomerization and cyclization of farnesyl pyro-phosphate to form trichodiene, the first cyclic intermediate in the biosynthetic pathway for trichothecenes. It serves to branch trichothecene biosynthesis from the isoprenoid pathway. This Fusarium austroamericanum protein is Trichodiene synthase (TRI5).